The sequence spans 405 residues: Tryptophan synthase beta chain (405 aa).

Position 95 is an N6-(pyridoxal phosphate)lysine (lysine 95).

Belongs to the TrpB family. Tetramer of two alpha and two beta chains. Pyridoxal 5'-phosphate is required as a cofactor.

It catalyses the reaction (1S,2R)-1-C-(indol-3-yl)glycerol 3-phosphate + L-serine = D-glyceraldehyde 3-phosphate + L-tryptophan + H2O. The protein operates within amino-acid biosynthesis; L-tryptophan biosynthesis; L-tryptophan from chorismate: step 5/5. Functionally, the beta subunit is responsible for the synthesis of L-tryptophan from indole and L-serine. In Pseudomonas putida (strain ATCC 47054 / DSM 6125 / CFBP 8728 / NCIMB 11950 / KT2440), this protein is Tryptophan synthase beta chain.